Here is a 1287-residue protein sequence, read N- to C-terminus: FYVE zinc finger domain protein UPA1 (1287 aa).

Residues 1–298 (MTIPDPANII…SSTSLSAPAE (298 aa)) form a disordered region. Positions 86-99 (DSSSFGSKPSSSAS) are enriched in low complexity. The span at 115–136 (WATSSTTSHPSKASQSTLSPNA) shows a compositional bias: polar residues. Residues 128–144 (SQSTLSPNASVFKPSRS) carry the PAM2 motif. Composition is skewed to basic and acidic residues over residues 177–187 (RPDHAPLDHEQ) and 201–211 (KVEEQRGDHSI). The span at 212–235 (PHQNGLVSAQAQTASDAVSTSKYT) shows a compositional bias: polar residues. Positions 239–253 (ADQEEDQDDFVYPGA) match the PAM2L 1 motif. Over residues 255–294 (SPSSGQAAVQDEQQAVTDSQTTKSLTKQESDPEASSTSLS) the composition is skewed to polar residues. ANK repeat units lie at residues 366–395 (NGLV…AIVE), 400–429 (EGET…DANA), 433–463 (DGWT…QIDV), and 468–497 (GAWT…ADPF). Disordered regions lie at residues 582–630 (NGGK…VGLP), 643–697 (RVGP…ASAQ), 934–960 (REAA…YPNS), and 977–1005 (TSGT…APSE). Residues 674–695 (STPTPESVLQARRGTSSVNGAS) are compositionally biased toward polar residues. Positions 938-955 (GLDEDEDEDAADDDDDEF) are enriched in acidic residues. Residues 941–960 (EDEDEDAADDDDDEFIYPNS) carry the PAM2L 2 motif. Low complexity predominate over residues 981 to 995 (LSRPSLSQRQSSAAS). An FYVE-type zinc finger spans residues 1055-1129 (DEEAKDCIGC…VCNGCHAELQ (75 aa)). Zn(2+)-binding residues include C1061, C1064, C1077, C1080, C1085, C1088, C1121, and C1124. The segment at 1243–1283 (CSICMEDFVANSTIARLPCLCYFHRGCIDSWFKRGRECPVH) adopts an RING-type; atypical zinc-finger fold.

Belongs to the UPA1 PAM2 domain-binding protein family. Part of large ribonucleoprotein complexes (mRNPs) containing RNA-binding proteins RRM4 and PAB1, endosome-binding protein UPA1, core scaffold protein UPA2 and associated factor GRP1. Interacts (via PAM2 motif) with PAB1 (via PABC domain). Interacts (via PAM2L motifs) with RRM4.

It is found in the cytoplasm. The protein localises to the cytoskeleton. It localises to the endosome. Its function is as follows. FYVE zinc finger domain protein that functions in endosomal targeting and transport of mRNAs, as well as associated ribosomes. The endosomal mRNA transport regulates polarity of the infectious hyphae by transporting a broad spectrum of cargo mRNAs from the nucleus to cell poles. Involved in chitinase CTS1 secretion. Dispensable for general endosomal functions but crucial for endosomal recruitment of RRM4. This Mycosarcoma maydis (Corn smut fungus) protein is FYVE zinc finger domain protein UPA1.